The chain runs to 541 residues: Membrane protein insertase YidC (541 aa).

5 consecutive transmembrane segments (helical) span residues 7-27 (LLFM…QVDY), 345-365 (LVQN…AILY), 415-435 (LGGC…YWTF), 453-473 (LSAQ…MFLL), and 492-512 (FMPL…VLYW).

The protein belongs to the OXA1/ALB3/YidC family. Type 1 subfamily. Interacts with the Sec translocase complex via SecD. Specifically interacts with transmembrane segments of nascent integral membrane proteins during membrane integration.

The protein resides in the cell inner membrane. Required for the insertion and/or proper folding and/or complex formation of integral membrane proteins into the membrane. Involved in integration of membrane proteins that insert both dependently and independently of the Sec translocase complex, as well as at least some lipoproteins. Aids folding of multispanning membrane proteins. This Histophilus somni (strain 129Pt) (Haemophilus somnus) protein is Membrane protein insertase YidC.